A 136-amino-acid chain; its full sequence is MTHRAVPCQPRAFSKIKVLVISFLFLMVAFLPFSSHGKLQEQIASYVSWKLETRAIHRFGGCNFAHQMQRNGIQRKIVCSDLERGNNTGMNACMQLVLSDLVARRVLLKTVHVHPWHLDGISGAFSVCCKDATEVS.

A signal peptide spans 1–35; that stretch reads MTHRAVPCQPRAFSKIKVLVISFLFLMVAFLPFSS.

This is an uncharacterized protein from Saccharomyces cerevisiae (strain ATCC 204508 / S288c) (Baker's yeast).